We begin with the raw amino-acid sequence, 413 residues long: Isobutyryl-CoA dehydrogenase, mitochondrial (413 aa).

The N-terminal 20 residues, 1–20 (MAMLRSGYRRFGCLRAALKS), are a transit peptide targeting the mitochondrion. Lys48 is subject to N6-acetyllysine; alternate. N6-succinyllysine; alternate is present on Lys48. FAD is bound by residues 156-165 (YCLTEPGSGS) and 189-191 (FIS). Substrate is bound at residue Ser165. N6-succinyllysine is present on Lys211. Lys229 carries the N6-acetyllysine modification. Lys269 carries the post-translational modification N6-succinyllysine. 272-275 (NGGR) contacts substrate. FAD-binding positions include Arg300, 310-311 (SQ), and 369-373 (QMHGG). The Proton acceptor role is filled by Glu396. 398 to 400 (SNE) is a binding site for FAD. Arg408 is a binding site for substrate.

It belongs to the acyl-CoA dehydrogenase family. In terms of assembly, homotetramer, formed by a dimer of dimers. Requires FAD as cofactor.

The protein localises to the mitochondrion. The enzyme catalyses 2-methylpropanoyl-CoA + oxidized [electron-transfer flavoprotein] + H(+) = 2-methylpropenoyl-CoA + reduced [electron-transfer flavoprotein]. It catalyses the reaction (2S)-2-methylbutanoyl-CoA + oxidized [electron-transfer flavoprotein] + H(+) = (2E)-2-methylbut-2-enoyl-CoA + reduced [electron-transfer flavoprotein]. The catalysed reaction is propanoyl-CoA + oxidized [electron-transfer flavoprotein] + H(+) = acryloyl-CoA + reduced [electron-transfer flavoprotein]. Its pathway is amino-acid degradation; L-valine degradation. In terms of biological role, isobutyryl-CoA dehydrogenase which catalyzes the conversion of 2-methylpropanoyl-CoA to (2E)-2-methylpropenoyl-CoA in the valine catabolic pathway. To a lesser extent, also able to catalyze the oxidation of (2S)-2-methylbutanoyl-CoA. The sequence is that of Isobutyryl-CoA dehydrogenase, mitochondrial from Mus musculus (Mouse).